The primary structure comprises 380 residues: Putative 8-amino-7-oxononanoate synthase (380 aa).

Substrate is bound at residue Arg18. 106–107 serves as a coordination point for pyridoxal 5'-phosphate; it reads GY. Residue His131 coordinates substrate. Pyridoxal 5'-phosphate is bound by residues Ser179, 205-208, and 236-239; these read DEAH and TFGK. Lys239 is subject to N6-(pyridoxal phosphate)lysine. Thr352 is a substrate binding site.

The protein belongs to the class-II pyridoxal-phosphate-dependent aminotransferase family. BioF subfamily. Homodimer. Pyridoxal 5'-phosphate serves as cofactor.

The catalysed reaction is 6-carboxyhexanoyl-[ACP] + L-alanine + H(+) = (8S)-8-amino-7-oxononanoate + holo-[ACP] + CO2. The protein operates within cofactor biosynthesis; biotin biosynthesis. Functionally, catalyzes the decarboxylative condensation of pimeloyl-[acyl-carrier protein] and L-alanine to produce 8-amino-7-oxononanoate (AON), [acyl-carrier protein], and carbon dioxide. The sequence is that of Putative 8-amino-7-oxononanoate synthase (bioF) from Neisseria gonorrhoeae (strain ATCC 700825 / FA 1090).